A 347-amino-acid polypeptide reads, in one-letter code: Histone deacetylase 11 (347 aa).

Residues 14 to 318 (TRWPIVYSPR…ARIIADSILN (305 aa)) are histone deacetylase. The active site involves H143.

This sequence belongs to the histone deacetylase family. Interacts with HDAC6.

It localises to the nucleus. It carries out the reaction N(6)-acetyl-L-lysyl-[histone] + H2O = L-lysyl-[histone] + acetate. Responsible for the deacetylation of lysine residues on the N-terminal part of the core histones (H2A, H2B, H3 and H4). Histone deacetylation gives a tag for epigenetic repression and plays an important role in transcriptional regulation, cell cycle progression and developmental events. Histone deacetylases act via the formation of large multiprotein complexes. This chain is Histone deacetylase 11 (HDAC11), found in Macaca fascicularis (Crab-eating macaque).